We begin with the raw amino-acid sequence, 786 residues long: Endonuclease MutS2 (786 aa).

335-342 provides a ligand contact to ATP; sequence GPNTGGKT. Residues 711 to 786 form the Smr domain; the sequence is LDLRGERFEN…GLGVTVVELK (76 aa).

Belongs to the DNA mismatch repair MutS family. MutS2 subfamily. As to quaternary structure, homodimer. Binds to stalled ribosomes, contacting rRNA.

In terms of biological role, endonuclease that is involved in the suppression of homologous recombination and thus may have a key role in the control of bacterial genetic diversity. Functionally, acts as a ribosome collision sensor, splitting the ribosome into its 2 subunits. Detects stalled/collided 70S ribosomes which it binds and splits by an ATP-hydrolysis driven conformational change. Acts upstream of the ribosome quality control system (RQC), a ribosome-associated complex that mediates the extraction of incompletely synthesized nascent chains from stalled ribosomes and their subsequent degradation. Probably generates substrates for RQC. This chain is Endonuclease MutS2, found in Bacillus cereus (strain Q1).